The sequence spans 406 residues: Cysteine desulfurase (406 aa).

Lys-226 bears the N6-(pyridoxal phosphate)lysine mark. Cys-364 functions as the Cysteine persulfide intermediate in the catalytic mechanism.

This sequence belongs to the class-V pyridoxal-phosphate-dependent aminotransferase family. Csd subfamily. Homodimer. Interacts with SufE and the SufBCD complex composed of SufB, SufC and SufD. The interaction with SufE is required to mediate the direct transfer of the sulfur atom from the S-sulfanylcysteine. Pyridoxal 5'-phosphate serves as cofactor.

It is found in the cytoplasm. The catalysed reaction is (sulfur carrier)-H + L-cysteine = (sulfur carrier)-SH + L-alanine. It carries out the reaction L-selenocysteine + AH2 = hydrogenselenide + L-alanine + A + H(+). It functions in the pathway cofactor biosynthesis; iron-sulfur cluster biosynthesis. In terms of biological role, cysteine desulfurases mobilize the sulfur from L-cysteine to yield L-alanine, an essential step in sulfur metabolism for biosynthesis of a variety of sulfur-containing biomolecules. Component of the suf operon, which is activated and required under specific conditions such as oxidative stress and iron limitation. Acts as a potent selenocysteine lyase in vitro, that mobilizes selenium from L-selenocysteine. Selenocysteine lyase activity is however unsure in vivo. This chain is Cysteine desulfurase, found in Klebsiella pneumoniae subsp. pneumoniae (strain ATCC 700721 / MGH 78578).